Reading from the N-terminus, the 54-residue chain is Defensin-like protein (54 aa).

The residue at position 1 (Q1) is a Pyrrolidone carboxylic acid. 4 cysteine pairs are disulfide-bonded: C4–C52, C16–C37, C22–C47, and C26–C49.

The protein belongs to the DEFL family. In terms of assembly, monomer.

The protein resides in the secreted. Functionally, taste-modifying protein; sweet-tasting. It is 2000 sweeter than sucrose on a molar basis. Its function is as follows. Has a pH-specific antimicrobial activity against bacteria (B.subtilis, E.coli and S.aureus) and the fungus C.albicans. The polypeptide is Defensin-like protein (Pentadiplandra brazzeana).